The primary structure comprises 179 residues: ATP synthase subunit b (179 aa).

The chain crosses the membrane as a helical span at residues 13 to 33; that stretch reads IHIDELVFGLIAFAVIFALVY.

Belongs to the ATPase B chain family. F-type ATPases have 2 components, F(1) - the catalytic core - and F(0) - the membrane proton channel. F(1) has five subunits: alpha(3), beta(3), gamma(1), delta(1), epsilon(1). F(0) has three main subunits: a(1), b(2) and c(10-14). The alpha and beta chains form an alternating ring which encloses part of the gamma chain. F(1) is attached to F(0) by a central stalk formed by the gamma and epsilon chains, while a peripheral stalk is formed by the delta and b chains.

The protein localises to the cell membrane. In terms of biological role, f(1)F(0) ATP synthase produces ATP from ADP in the presence of a proton or sodium gradient. F-type ATPases consist of two structural domains, F(1) containing the extramembraneous catalytic core and F(0) containing the membrane proton channel, linked together by a central stalk and a peripheral stalk. During catalysis, ATP synthesis in the catalytic domain of F(1) is coupled via a rotary mechanism of the central stalk subunits to proton translocation. Functionally, component of the F(0) channel, it forms part of the peripheral stalk, linking F(1) to F(0). The chain is ATP synthase subunit b from Thermobifida fusca (strain YX).